The primary structure comprises 112 residues: Protein FAM32A (112 aa).

The interval 23-58 (TKRKKKKKDKDKAKLLEAMGTSKKNEEEKRRGLDKR) is disordered. Residues 45–58 (KKNEEEKRRGLDKR) are compositionally biased toward basic and acidic residues.

The protein belongs to the FAM32 family.

It is found in the nucleus. Its function is as follows. May induce G2 arrest and apoptosis. May also increase cell sensitivity to apoptotic stimuli. This Bos taurus (Bovine) protein is Protein FAM32A (FAM32A).